Consider the following 503-residue polypeptide: UDP-N-acetylmuramate--L-alanine ligase (503 aa).

120–126 (GTHGKTS) contributes to the ATP binding site.

It belongs to the MurCDEF family.

It is found in the cytoplasm. It carries out the reaction UDP-N-acetyl-alpha-D-muramate + L-alanine + ATP = UDP-N-acetyl-alpha-D-muramoyl-L-alanine + ADP + phosphate + H(+). Its pathway is cell wall biogenesis; peptidoglycan biosynthesis. Its function is as follows. Cell wall formation. In Rhodococcus jostii (strain RHA1), this protein is UDP-N-acetylmuramate--L-alanine ligase.